Reading from the N-terminus, the 142-residue chain is Nucleoside diphosphate kinase (142 aa).

ATP-binding residues include Lys-11, Phe-59, Arg-87, Thr-93, Arg-104, and Asn-114. The active-site Pros-phosphohistidine intermediate is the His-117.

It belongs to the NDK family. Mg(2+) serves as cofactor.

It is found in the cytoplasm. The enzyme catalyses a 2'-deoxyribonucleoside 5'-diphosphate + ATP = a 2'-deoxyribonucleoside 5'-triphosphate + ADP. It carries out the reaction a ribonucleoside 5'-diphosphate + ATP = a ribonucleoside 5'-triphosphate + ADP. Its function is as follows. Major role in the synthesis of nucleoside triphosphates other than ATP. The ATP gamma phosphate is transferred to the NDP beta phosphate via a ping-pong mechanism, using a phosphorylated active-site intermediate. This chain is Nucleoside diphosphate kinase, found in Hyperthermus butylicus (strain DSM 5456 / JCM 9403 / PLM1-5).